Here is a 430-residue protein sequence, read N- to C-terminus: Tol-Pal system protein TolB (430 aa).

Residues 1-26 form the signal peptide; sequence MSLMTKLGLRTLVASCLIAVGGAANA.

This sequence belongs to the TolB family. The Tol-Pal system is composed of five core proteins: the inner membrane proteins TolA, TolQ and TolR, the periplasmic protein TolB and the outer membrane protein Pal. They form a network linking the inner and outer membranes and the peptidoglycan layer.

It is found in the periplasm. Functionally, part of the Tol-Pal system, which plays a role in outer membrane invagination during cell division and is important for maintaining outer membrane integrity. The polypeptide is Tol-Pal system protein TolB (Paraburkholderia xenovorans (strain LB400)).